Here is a 135-residue protein sequence, read N- to C-terminus: DNA-directed RNA polymerase subunit omega (135 aa).

The interval 107 to 135 (ASQESQDYEVDGEIDDEINDQDGDEEVSV) is disordered. The segment covering 112–135 (QDYEVDGEIDDEINDQDGDEEVSV) has biased composition (acidic residues).

This sequence belongs to the RNA polymerase subunit omega family. The RNAP catalytic core consists of 2 alpha, 1 beta, 1 beta' and 1 omega subunit. When a sigma factor is associated with the core the holoenzyme is formed, which can initiate transcription.

It carries out the reaction RNA(n) + a ribonucleoside 5'-triphosphate = RNA(n+1) + diphosphate. Functionally, promotes RNA polymerase assembly. Latches the N- and C-terminal regions of the beta' subunit thereby facilitating its interaction with the beta and alpha subunits. In Wolbachia pipientis wMel, this protein is DNA-directed RNA polymerase subunit omega.